Reading from the N-terminus, the 619-residue chain is ATP-dependent zinc metalloprotease FtsH (619 aa).

Topologically, residues 1-5 (MKYFK) are cytoplasmic. A helical membrane pass occupies residues 6–26 (GISFYIIIFILILVIITFFTA). The Extracellular segment spans residues 27-110 (TDNPPKMSYS…VTQPPQPPWW (84 aa)). Residues 111–131 (VSMLPTVGLVIILILIWFFFI) form a helical membrane-spanning segment. Over 132–619 (QQSQGGGGGN…GSSQTPQLEG (488 aa)) the chain is Cytoplasmic. ATP is bound at residue 204–211 (GPPGTGKT). H426 contacts Zn(2+). Residue E427 is part of the active site. Zn(2+)-binding residues include H430 and D502.

The protein in the central section; belongs to the AAA ATPase family. It in the C-terminal section; belongs to the peptidase M41 family. As to quaternary structure, homohexamer. Zn(2+) serves as cofactor.

It localises to the cell membrane. Functionally, acts as a processive, ATP-dependent zinc metallopeptidase for both cytoplasmic and membrane proteins. Plays a role in the quality control of integral membrane proteins. This chain is ATP-dependent zinc metalloprotease FtsH, found in Ruminiclostridium cellulolyticum (strain ATCC 35319 / DSM 5812 / JCM 6584 / H10) (Clostridium cellulolyticum).